Consider the following 339-residue polypeptide: DNA-directed RNA polymerase subunit alpha (339 aa).

Residues 1-235 (MVIQKNWQEL…DQLQIFVNFE (235 aa)) form an alpha N-terminal domain (alpha-NTD) region. The alpha C-terminal domain (alpha-CTD) stretch occupies residues 251–339 (FNPALLKKVD…DLAKRFEEHY (89 aa)).

This sequence belongs to the RNA polymerase alpha chain family. As to quaternary structure, homodimer. The RNAP catalytic core consists of 2 alpha, 1 beta, 1 beta' and 1 omega subunit. When a sigma factor is associated with the core the holoenzyme is formed, which can initiate transcription.

The catalysed reaction is RNA(n) + a ribonucleoside 5'-triphosphate = RNA(n+1) + diphosphate. Functionally, DNA-dependent RNA polymerase catalyzes the transcription of DNA into RNA using the four ribonucleoside triphosphates as substrates. This chain is DNA-directed RNA polymerase subunit alpha, found in Methylobacterium nodulans (strain LMG 21967 / CNCM I-2342 / ORS 2060).